The primary structure comprises 38 residues: Photosystem II reaction center protein L (38 aa).

The chain crosses the membrane as a helical span at residues 17–37 (SLYWGLLLIFVLAVPFSNYFF).

It belongs to the PsbL family. PSII is composed of 1 copy each of membrane proteins PsbA, PsbB, PsbC, PsbD, PsbE, PsbF, PsbH, PsbI, PsbJ, PsbK, PsbL, PsbM, PsbT, PsbX, PsbY, PsbZ, Psb30/Ycf12, at least 3 peripheral proteins of the oxygen-evolving complex and a large number of cofactors. It forms dimeric complexes.

Its subcellular location is the plastid. It is found in the chloroplast thylakoid membrane. Functionally, one of the components of the core complex of photosystem II (PSII). PSII is a light-driven water:plastoquinone oxidoreductase that uses light energy to abstract electrons from H(2)O, generating O(2) and a proton gradient subsequently used for ATP formation. It consists of a core antenna complex that captures photons, and an electron transfer chain that converts photonic excitation into a charge separation. This subunit is found at the monomer-monomer interface and is required for correct PSII assembly and/or dimerization. The protein is Photosystem II reaction center protein L of Pinus thunbergii (Japanese black pine).